A 205-amino-acid polypeptide reads, in one-letter code: Endothelial cell-specific chemotaxis regulator (205 aa).

The N-terminal stretch at 1-24 (MGTAGAMQLCWVILGFLLFRGHNS) is a signal peptide. The Extracellular portion of the chain corresponds to 25-124 (QPTMTQTSSS…TSETVLTVAA (100 aa)). Composition is skewed to polar residues over residues 49 to 71 (SSNP…STGT) and 86 to 101 (SRDT…TTMS). The tract at residues 49 to 101 (SSNPGYIPSSEANRPSHLSSTGTPGAGVPSSGRDGGTSRDTFQTVPPNSTTMS) is disordered. Residues 125–145 (FGVISFIVILVVVVIILVGVV) form a helical membrane-spanning segment. Topologically, residues 146-205 (SLRFKCRKSKESEDPQKPGSSGLSESCSTANGEKDSITLISMKNINMNNGKQSLSAEKVL) are cytoplasmic. The tract at residues 153–175 (KSKESEDPQKPGSSGLSESCSTA) is disordered. The segment covering 163 to 175 (PGSSGLSESCSTA) has biased composition (polar residues). Phosphoserine is present on Ser-198.

The protein belongs to the ECSCR family. Interacts with FLNA. Interacts with the 20S proteasome subunit PSMA7. In terms of processing, may be heavily O-glycosylated. Highest expression in endothelial cells. Also detected in vascular smooth muscle, macrophages, lymphocytes, and mast cells.

The protein localises to the cell membrane. It is found in the cytoplasm. Functionally, regulates endothelial chemotaxis and tube formation. Has a role in angiogenesis and apoptosis via modulation of the actin cytoskeleton and facilitation of proteasomal degradation of the apoptosis inhibitors BIRC3/IAP1 and BIRC2/IAP2. The polypeptide is Endothelial cell-specific chemotaxis regulator (ECSCR) (Homo sapiens (Human)).